Consider the following 327-residue polypeptide: dTDP-4-dehydrorhamnose reductase (327 aa).

Residues Met1 to Asn22 form a disordered region. Residues Gly43–Val45, Asp69–Ile70, and Ala91–Thr93 contribute to the NADH site. NADPH-binding positions include Met44–Val45, Asp69–Ile70, and Ala91–Thr93. Thr132–Asp133 provides a ligand contact to dTDP-beta-L-rhamnose. The NADH site is built by Tyr157 and Lys161. NADPH is bound by residues Tyr157 and Lys161. The Proton donor/acceptor role is filled by Tyr157. Trp182 contacts dTDP-beta-L-rhamnose. Basic and acidic residues predominate over residues Pro264–Pro276. Positions Pro264–Ser292 are disordered.

It belongs to the dTDP-4-dehydrorhamnose reductase family. It depends on Mg(2+) as a cofactor.

It carries out the reaction dTDP-beta-L-rhamnose + NADP(+) = dTDP-4-dehydro-beta-L-rhamnose + NADPH + H(+). Its pathway is carbohydrate biosynthesis; dTDP-L-rhamnose biosynthesis. Involved in the biosynthesis of the dTDP-L-rhamnose which is a component of the critical linker, D-N-acetylglucosamine-L-rhamnose disaccharide, which connects the galactan region of arabinogalactan to peptidoglycan via a phosphodiester linkage. Catalyzes the reduction of dTDP-6-deoxy-L-lyxo-4-hexulose to yield dTDP-L-rhamnose. The polypeptide is dTDP-4-dehydrorhamnose reductase (Mycolicibacterium smegmatis (strain ATCC 700084 / mc(2)155) (Mycobacterium smegmatis)).